The primary structure comprises 247 residues: Probable transcriptional regulatory protein GSU1074 (247 aa).

This sequence belongs to the TACO1 family.

The protein resides in the cytoplasm. The polypeptide is Probable transcriptional regulatory protein GSU1074 (Geobacter sulfurreducens (strain ATCC 51573 / DSM 12127 / PCA)).